The sequence spans 414 residues: Ena/VASP-like protein (414 aa).

The region spanning 1–112 (MSEQSICQAR…NAMLFALNIM (112 aa)) is the WH1 domain. Serine 130 carries the phosphoserine modification. The segment at 157-369 (ATGPILPPGH…SRVKPAGSVN (213 aa)) is disordered. Residues 179 to 204 (GPPPPPPPPVPPPPTGSTPPPPPPLP) are compositionally biased toward pro residues. Positions 217–228 (SASGLAAALAGA) are enriched in low complexity. The EVH2 block A stretch occupies residues 220–240 (GLAAALAGAKLRRVQRPEDAS). The interval 220-411 (GLAAALAGAK…DAIRQELSGI (192 aa)) is EVH2. The short motif at 229-232 (KLRR) is the KLKR element. Over residues 240–251 (SGGSSPSGTSKS) the composition is skewed to low complexity. Serine 244 and serine 257 each carry phosphoserine. Positions 263-280 (GGLMEEMNKLLAKRRKAA) are EVH2 block B. Residues 297–318 (EDPSTSPSPGTRATSQPPNSSE) show a composition bias toward polar residues. Serine 302, serine 304, serine 327, serine 329, serine 339, serine 347, serine 352, and serine 367 each carry phosphoserine. Residues 319–329 (AGRKPWERSNS) are compositionally biased toward basic and acidic residues. The tract at residues 340 to 360 (RTPSVAKSPEAKSPLQSQPHS) is required for interaction with ZDHHC17. Positions 377–411 (DLDRMKQEILEEVVRELHKVKEEIIDAIRQELSGI) are EVH2 block C.

The protein belongs to the Ena/VASP family. As to quaternary structure, homotetramer. Binds to the SH3 domains of ABL1, LYN and SRC. Also binds to profilin, with preference for isoform IIa of PFN2, and the WW domain of APBB1/FE65. Binds to SEMA6A. Interacts, via the Pro-rich region, with the C-terminal SH3 domain of DNMBP. Interacts with RAPH1. Binds, via the EVH1 domain, the Pro-rich domain of Listeria monocytogenes actA. Binds, via the EVH1 domain, the Pro-rich domain of ZYX. Interacts with FYB1. Interacts with ZDHHC17. Post-translationally, phosphorylated by PKA; phosphorylation abolishes binding to SH3 domains of ABL and SRC. Highest expression in thymus and spleen (at protein level). Low levels in placenta, ovary, testis, fat and lung (at protein level). Isoform 1 and isoform 2 are expressed in cortical neurons and glial cells.

The protein localises to the cytoplasm. It is found in the cytoskeleton. It localises to the stress fiber. Its subcellular location is the cell projection. The protein resides in the lamellipodium. Ena/VASP proteins are actin-associated proteins involved in a range of processes dependent on cytoskeleton remodeling and cell polarity such as axon guidance and lamellipodial and filopodial dynamics in migrating cells. EVL enhances actin nucleation and polymerization. The sequence is that of Ena/VASP-like protein (Evl) from Mus musculus (Mouse).